A 208-amino-acid chain; its full sequence is Uridine kinase (208 aa).

Residue 12–19 (GGSGGGKT) coordinates ATP.

It belongs to the uridine kinase family.

It localises to the cytoplasm. It catalyses the reaction uridine + ATP = UMP + ADP + H(+). The enzyme catalyses cytidine + ATP = CMP + ADP + H(+). Its pathway is pyrimidine metabolism; CTP biosynthesis via salvage pathway; CTP from cytidine: step 1/3. It participates in pyrimidine metabolism; UMP biosynthesis via salvage pathway; UMP from uridine: step 1/1. The polypeptide is Uridine kinase (Streptococcus pyogenes serotype M3 (strain ATCC BAA-595 / MGAS315)).